A 157-amino-acid polypeptide reads, in one-letter code: Transcription elongation factor GreA (157 aa).

Residues 1–60 (MEKVPMTSAGFAALGEELKKRQSEDRPRIIEHIAEARSHGDLSENAEYHAAKEEQSHNEG) are disordered. Residues 16-60 (EELKKRQSEDRPRIIEHIAEARSHGDLSENAEYHAAKEEQSHNEG) show a composition bias toward basic and acidic residues. The stretch at 46–73 (AEYHAAKEEQSHNEGRIAELEDKLARAD) forms a coiled coil.

Belongs to the GreA/GreB family.

Its function is as follows. Necessary for efficient RNA polymerase transcription elongation past template-encoded arresting sites. The arresting sites in DNA have the property of trapping a certain fraction of elongating RNA polymerases that pass through, resulting in locked ternary complexes. Cleavage of the nascent transcript by cleavage factors such as GreA or GreB allows the resumption of elongation from the new 3'terminus. GreA releases sequences of 2 to 3 nucleotides. This chain is Transcription elongation factor GreA, found in Bradyrhizobium diazoefficiens (strain JCM 10833 / BCRC 13528 / IAM 13628 / NBRC 14792 / USDA 110).